Here is a 357-residue protein sequence, read N- to C-terminus: MGRRIAVVLFNLGGPDTGNDVQPFLKNLFRDPAIIRAPLPVRWLVARLISTLRAPVVKQNYAMMDAGGGSPLLRETKKQADALQAELAKKLPGDEVRCFIAMRYWHPFTEEAAAEVQKWGADEVVLLPLYPQFSTTTTGSSLSAWHKAYKGKSRTICCYPFEENFVSAHVDQIMAAWERAGRPGNVNLLLSAHGLPESVVKSGDPYQWQCEALAEMIAGRVPADWEVSVCYQSRVGPMKWIGPPTEEEIARISDQGRNILIAPIAFVSEHIETLVELGEEYRLVAEKHGAASYTRVEALGVHPGFISTLTGEVLAALGMKETIRSCAGGRLCPSGWSGCPQAELKQKAGVRITETAG.

Fe cation-binding residues include His-193 and Glu-272.

Belongs to the ferrochelatase family.

It is found in the cytoplasm. It catalyses the reaction heme b + 2 H(+) = protoporphyrin IX + Fe(2+). It functions in the pathway porphyrin-containing compound metabolism; protoheme biosynthesis; protoheme from protoporphyrin-IX: step 1/1. In terms of biological role, catalyzes the ferrous insertion into protoporphyrin IX. The chain is Ferrochelatase from Hyphomonas neptunium (strain ATCC 15444).